Consider the following 95-residue polypeptide: Small ribosomal subunit protein uS19 (95 aa).

The disordered stretch occupies residues 73–95 (EFSPTRTYRGHGADKNAKGSKKK).

The protein belongs to the universal ribosomal protein uS19 family.

Its function is as follows. Protein S19 forms a complex with S13 that binds strongly to the 16S ribosomal RNA. This is Small ribosomal subunit protein uS19 from Deinococcus radiodurans (strain ATCC 13939 / DSM 20539 / JCM 16871 / CCUG 27074 / LMG 4051 / NBRC 15346 / NCIMB 9279 / VKM B-1422 / R1).